Consider the following 303-residue polypeptide: Glutaminase (303 aa).

Positions 63, 113, 157, 164, 188, 239, and 257 each coordinate substrate.

This sequence belongs to the glutaminase family. In terms of assembly, homotetramer.

The catalysed reaction is L-glutamine + H2O = L-glutamate + NH4(+). The chain is Glutaminase from Saccharopolyspora erythraea (strain ATCC 11635 / DSM 40517 / JCM 4748 / NBRC 13426 / NCIMB 8594 / NRRL 2338).